Here is a 264-residue protein sequence, read N- to C-terminus: Vacuolar protein sorting-associated protein 75 (264 aa).

Phosphoserine is present on Ser-3. A disordered region spans residues 223–264 (LEDEEGESGLSADGDSEDDDGSLGEVDLPLSDEEPSSKKRKV).

The protein belongs to the nucleosome assembly protein (NAP) family. As to quaternary structure, homodimer. Homotetramer. Forms a complex with RTT109; consisting of a VPS75 dimer contacted by two RTT109 subunits. Interacts with RTT109; the interaction is direct. Interacts with ASF1. Interacts with histone H3/H4 heterodimers and heterotetramers via histone H3.

It localises to the nucleus. Its function is as follows. Histone chaperone which acts as a cofactor stimulating histone H3 acetylation by RTT109. Preferentially stimulates histone H3 'Lys-9' acetylation by RTT109. May also stimulate histone H3 'Lys-56' acetylation by RTT109. Assembles nucleosomes (in vitro). The protein is Vacuolar protein sorting-associated protein 75 (VPS75) of Saccharomyces cerevisiae (strain ATCC 204508 / S288c) (Baker's yeast).